A 162-amino-acid chain; its full sequence is MNGVAAALLVWILTSPSSSDHGSENGWPKHTACNSGGLEVVYQSCDPLQDFGLSIDQCSKQIQSNLNIRFGIILRQDIRKLFLDITLMAKGSSILNYSYPLCEEDQPKFSFCGRRKGEQIYYAGPVNNPGLDVPQGEYQLLLELYNENRATVACANATVTSS.

The signal sequence occupies residues 1–19 (MNGVAAALLVWILTSPSSS). 3 disulfide bridges follow: C33/C58, C45/C154, and C102/C112. N-linked (GlcNAc...) asparagine glycosylation occurs at N96. N-linked (GlcNAc...) asparagine glycosylation is present at N156.

M-shaped tetramer of two CD180-LY86 heterodimers. Highly expressed in spleen, liver, brain and thymus, and at lower levels in kidney.

It localises to the secreted. The protein resides in the extracellular space. Its function is as follows. May cooperate with CD180 and TLR4 to mediate the innate immune response to bacterial lipopolysaccharide (LPS) and cytokine production. Important for efficient CD180 cell surface expression. In Mus musculus (Mouse), this protein is Lymphocyte antigen 86 (Ly86).